A 486-amino-acid polypeptide reads, in one-letter code: G2/mitotic-specific cyclin-4 (486 aa).

Disordered regions lie at residues 1 to 80 (MRSY…SSNK) and 105 to 126 (VLLN…DKEN). Polar residues predominate over residues 25–41 (ANLSSNHTTAGQPSTSS). Residues 108–123 (NDDDDETDDEFDDEED) show a composition bias toward acidic residues. Residues 122–184 (EDKENRYHDL…QSHTQDMRSI (63 aa)) are a coiled coil. In terms of domain architecture, Cyclin N-terminal spans 234–359 (EIFNYLHELE…FMIDVLEFDL (126 aa)).

It belongs to the cyclin family. Cyclin AB subfamily. In terms of assembly, interacts with IQG1.

2/mitotic-specific cyclin essential for the control of the cell cycle at the G2/M (mitosis) transition. G2/M cyclins accumulate steadily during G2 and are abruptly destroyed at mitosis. Degradation is necessary for the cell to exit from mitosis. Plays a role in morphogenesis by negatively regulating polarized growth. Through binding to CDC28 regulates cytokinesis, partly by phosphorylation of the actomyosin ring component IQG1. This Candida albicans (strain SC5314 / ATCC MYA-2876) (Yeast) protein is G2/mitotic-specific cyclin-4 (CLB4).